A 438-amino-acid chain; its full sequence is Phosphoribosylamine--glycine ligase (438 aa).

Positions 107-319 (RKLFEDYDIP…LAKISKQIVD (213 aa)) constitute an ATP-grasp domain. 134-197 (IDNFDEPVVV…EELLLGEEYT (64 aa)) is a binding site for ATP. Residues Gln277, Glu289, and Asn291 each contribute to the Mg(2+) site. Gln277, Glu289, and Asn291 together coordinate Mn(2+).

Belongs to the GARS family. Requires Mg(2+) as cofactor. The cofactor is Mn(2+).

It catalyses the reaction 5-phospho-beta-D-ribosylamine + glycine + ATP = N(1)-(5-phospho-beta-D-ribosyl)glycinamide + ADP + phosphate + H(+). Its pathway is purine metabolism; IMP biosynthesis via de novo pathway; N(1)-(5-phospho-D-ribosyl)glycinamide from 5-phospho-alpha-D-ribose 1-diphosphate: step 2/2. The chain is Phosphoribosylamine--glycine ligase from Methanosphaera stadtmanae (strain ATCC 43021 / DSM 3091 / JCM 11832 / MCB-3).